The primary structure comprises 206 residues: Small ribosomal subunit protein uS4 (206 aa).

The interval 18 to 45 is disordered; sequence NIWGRPKSPVNRREYGPGQHGQRRKGKM. The S4 RNA-binding domain maps to 94–157; that stretch reads RRLDAVVYRA…KQLASVLEAV (64 aa).

The protein belongs to the universal ribosomal protein uS4 family. As to quaternary structure, part of the 30S ribosomal subunit. Contacts protein S5. The interaction surface between S4 and S5 is involved in control of translational fidelity.

In terms of biological role, one of the primary rRNA binding proteins, it binds directly to 16S rRNA where it nucleates assembly of the body of the 30S subunit. Functionally, with S5 and S12 plays an important role in translational accuracy. The polypeptide is Small ribosomal subunit protein uS4 (Ruegeria pomeroyi (strain ATCC 700808 / DSM 15171 / DSS-3) (Silicibacter pomeroyi)).